A 500-amino-acid chain; its full sequence is Intracellular exo-alpha-(1-&gt;5)-L-arabinofuranosidase 1 (500 aa).

Alpha-L-arabinofuranose contacts are provided by Glu27, Asn72, and Asn172. Glu173 serves as the catalytic Proton donor/acceptor. The alpha-L-arabinofuranose site is built by Tyr244, Glu292, and Gln349. Residue Glu292 is the Nucleophile of the active site.

It belongs to the glycosyl hydrolase 51 family. As to quaternary structure, homohexamer; trimer of dimers.

It localises to the cytoplasm. The enzyme catalyses Hydrolysis of terminal non-reducing alpha-L-arabinofuranoside residues in alpha-L-arabinosides.. The catalysed reaction is (20S)-ginsenoside Rc + H2O = L-arabinofuranose + (20S)-ginsenoside Rd. Its pathway is glycan metabolism; L-arabinan degradation. At a concentration of 5 mM, K(+), Cu(2+) and Ni(2+) exhibit inhibitory effects on the activity. Additionally, the chemical reagent SDS also displays a certain degree of inhibition. Enzymatic activity is largely unaffected by product feedback inhibition. Functionally, involved in the degradation of arabinan and is a key enzyme in the complete degradation of the plant cell wall. Catalyzes the cleavage of terminal alpha-(1-&gt;5)-arabinofuranosyl bonds in different hemicellulosic homopolysaccharides (branched and debranched arabinans). It acts preferentially on arabinotriose, arabinobiose and linear alpha-(1-&gt;5)-L-arabinan, and is much less effective on branched sugar beet arabinan. When expressed in E.coli, the recombinant enyzme can hydrolyze, with relatively low catalytic efficiency, the terminal alpha-L-arabinofuranoside at the C20 position of ginsenoside Rc to produce ginsenoside Rd, a rare ginsenoside that exhibits diverse and powerful pharmacological activities. The protein is Intracellular exo-alpha-(1-&gt;5)-L-arabinofuranosidase 1 of Bacillus subtilis (strain 168).